We begin with the raw amino-acid sequence, 1462 residues long: Gag-Pol polyprotein (1462 aa).

Gly2 is lipidated: N-myristoyl glycine; by host. Residues 7–31 (VLRGKKADELEKIRLRPGGKKKYRL) form an interaction with Gp41 region. Positions 16–22 (LEKIRLR) match the Nuclear export signal motif. Positions 26–32 (KKKYRLK) match the Nuclear localization signal motif. The tract at residues 191–228 (NCVGDHQAAMQIIREIINEEAADWDVQHPIPGPLPAGQ) is interaction with human PPIA/CYPA and NUP153. The segment at 279 to 364 (YNPTNILDIK…GGPGQKARLM (86 aa)) is dimerization/Multimerization of capsid protein p24. CCHC-type zinc fingers lie at residues 388–405 (IKCW…QCRA) and 409–426 (QGCW…NCPD). A disordered region spans residues 441–507 (APQLPRGPKF…RRDTTQRDDR (67 aa)). Positions 454 to 468 (NTNSTPNGSSSGPTG) are enriched in low complexity. 2 stretches are compositionally biased toward basic and acidic residues: residues 471–490 (HAAR…RSDR) and 497–507 (ARRDTTQRDDR). The dimerization of protease stretch occupies residues 512–516 (PQFSL). A Peptidase A2 domain is found at 531 to 600 (VEVLLDTGAD…TPINIFGRNI (70 aa)). Asp536 functions as the For protease activity; shared with dimeric partner in the catalytic mechanism. Dimerization of protease stretches follow at residues 560–566 (GIGGFIN) and 599–611 (NILT…LNLP). A Reverse transcriptase domain is found at 654–844 (EGQLEEAPPT…PPYQWMGYEL (191 aa)). Residues Asp720, Asp795, and Asp796 each coordinate Mg(2+). An RT 'primer grip' region spans residues 837-845 (YQWMGYELW). The short motif at 1007 to 1023 (WEQWWDNYWQVTWIPDW) is the Tryptophan repeat motif element. The 124-residue stretch at 1043-1166 (IPGAETFYTD…IDHLVSQGIR (124 aa)) folds into the RNase H type-1 domain. The Mg(2+) site is built by Asp1052, Glu1087, Asp1107, and Asp1158. The Integrase-type zinc finger occupies 1172–1213 (ERIEPAQEEHGKYHSNVKELAHKFGLPNLVARQIVNTCAQCQ). Residues His1181, His1185, Cys1209, and Cys1212 each coordinate Zn(2+). One can recognise an Integrase catalytic domain in the interval 1222–1373 (QVNAELGTWQ…TPVERLVNMI (152 aa)). Positions 1233, 1285, and 1321 each coordinate Mg(2+). The integrase-type DNA-binding region spans 1392 to 1439 (FRVYFREGRNQLWQGPGELLWKGDGAVIVKVGTDIKVIPRRKAKIIRD). A disordered region spans residues 1443–1462 (RQEMDSGSHLEGAREDGEMA).

Homotrimer; further assembles as hexamers of trimers. Interacts with gp41 (via C-terminus). Interacts with host CALM1; this interaction induces a conformational change in the Matrix protein, triggering exposure of the myristate group. Interacts with host AP3D1; this interaction allows the polyprotein trafficking to multivesicular bodies during virus assembly. Part of the pre-integration complex (PIC) which is composed of viral genome, matrix protein, Vpr and integrase. In terms of assembly, homodimer; the homodimer further multimerizes as homohexamers or homopentamers. Interacts with human PPIA/CYPA. Interacts with human NUP153. Interacts with host PDZD8; this interaction stabilizes the capsid. Interacts with monkey TRIM5; this interaction destabilizes the capsid. As to quaternary structure, homodimer, whose active site consists of two apposed aspartic acid residues. Heterodimer of p66 RT and p51 RT (RT p66/p51). Heterodimerization of RT is essential for DNA polymerase activity. The overall folding of the subdomains is similar in p66 RT and p51 RT but the spatial arrangements of the subdomains are dramatically different. In terms of assembly, homotetramer; may further associate as a homohexadecamer. Part of the pre-integration complex (PIC) which is composed of viral genome, matrix protein, Vpr and integrase. Interacts with human SMARCB1/INI1 and human PSIP1/LEDGF isoform 1. Interacts with human KPNA3; this interaction might play a role in nuclear import of the pre-integration complex. Interacts with human NUP153; this interaction might play a role in nuclear import of the pre-integration complex. Requires Mg(2+) as cofactor. Post-translationally, specific enzymatic cleavages by the viral protease yield mature proteins. The protease is released by autocatalytic cleavage. The polyprotein is cleaved during and after budding, this process is termed maturation. Proteolytic cleavage of p66 RT removes the RNase H domain to yield the p51 RT subunit. Nucleocapsid protein p7 might be further cleaved after virus entry.

It localises to the host cell membrane. The protein resides in the host endosome. Its subcellular location is the host multivesicular body. It is found in the virion membrane. The protein localises to the host nucleus. It localises to the host cytoplasm. The protein resides in the virion. The enzyme catalyses Endopeptidase for which the P1 residue is preferably hydrophobic.. The catalysed reaction is Endohydrolysis of RNA in RNA/DNA hybrids. Three different cleavage modes: 1. sequence-specific internal cleavage of RNA. Human immunodeficiency virus type 1 and Moloney murine leukemia virus enzymes prefer to cleave the RNA strand one nucleotide away from the RNA-DNA junction. 2. RNA 5'-end directed cleavage 13-19 nucleotides from the RNA end. 3. DNA 3'-end directed cleavage 15-20 nucleotides away from the primer terminus.. It carries out the reaction 3'-end directed exonucleolytic cleavage of viral RNA-DNA hybrid.. It catalyses the reaction DNA(n) + a 2'-deoxyribonucleoside 5'-triphosphate = DNA(n+1) + diphosphate. With respect to regulation, protease: The viral protease is inhibited by many synthetic protease inhibitors (PIs), such as amprenavir, atazanavir, indinavir, loprinavir, nelfinavir, ritonavir and saquinavir. Use of protease inhibitors in tritherapy regimens permit more ambitious therapeutic strategies. Reverse transcriptase/ribonuclease H: RT can be inhibited either by nucleoside RT inhibitors (NRTIs) or by non nucleoside RT inhibitors (NNRTIs). NRTIs act as chain terminators, whereas NNRTIs inhibit DNA polymerization by binding a small hydrophobic pocket near the RT active site and inducing an allosteric change in this region. Classical NRTIs are abacavir, adefovir (PMEA), didanosine (ddI), lamivudine (3TC), stavudine (d4T), tenofovir (PMPA), zalcitabine (ddC), and zidovudine (AZT). Classical NNRTIs are atevirdine (BHAP U-87201E), delavirdine, efavirenz (DMP-266), emivirine (I-EBU), and nevirapine (BI-RG-587). The tritherapies used as a basic effective treatment of AIDS associate two NRTIs and one NNRTI. In terms of biological role, mediates, with Gag polyprotein, the essential events in virion assembly, including binding the plasma membrane, making the protein-protein interactions necessary to create spherical particles, recruiting the viral Env proteins, and packaging the genomic RNA via direct interactions with the RNA packaging sequence (Psi). Gag-Pol polyprotein may regulate its own translation, by the binding genomic RNA in the 5'-UTR. At low concentration, the polyprotein would promote translation, whereas at high concentration, the polyprotein would encapsidate genomic RNA and then shut off translation. Targets the polyprotein to the plasma membrane via a multipartite membrane-binding signal, that includes its myristoylated N-terminus. Matrix protein is part of the pre-integration complex. Implicated in the release from host cell mediated by Vpu. Binds to RNA. Functionally, forms the conical core that encapsulates the genomic RNA-nucleocapsid complex in the virion. Most core are conical, with only 7% tubular. The core is constituted by capsid protein hexamer subunits. The core is disassembled soon after virion entry. Host restriction factors such as TRIM5-alpha or TRIMCyp bind retroviral capsids and cause premature capsid disassembly, leading to blocks in reverse transcription. Capsid restriction by TRIM5 is one of the factors which restricts HIV-1 to the human species. Host PIN1 apparently facilitates the virion uncoating. On the other hand, interactions with PDZD8 or CYPA stabilize the capsid. Its function is as follows. Encapsulates and protects viral dimeric unspliced genomic RNA (gRNA). Binds these RNAs through its zinc fingers. Acts as a nucleic acid chaperone which is involved in rearangement of nucleic acid secondary structure during gRNA retrotranscription. Also facilitates template switch leading to recombination. As part of the polyprotein, participates in gRNA dimerization, packaging, tRNA incorporation and virion assembly. In terms of biological role, aspartyl protease that mediates proteolytic cleavages of Gag and Gag-Pol polyproteins during or shortly after the release of the virion from the plasma membrane. Cleavages take place as an ordered, step-wise cascade to yield mature proteins. This process is called maturation. Displays maximal activity during the budding process just prior to particle release from the cell. Also cleaves Nef and Vif, probably concomitantly with viral structural proteins on maturation of virus particles. Hydrolyzes host EIF4GI and PABP1 in order to shut off the capped cellular mRNA translation. The resulting inhibition of cellular protein synthesis serves to ensure maximal viral gene expression and to evade host immune response. Multifunctional enzyme that converts the viral RNA genome into dsDNA in the cytoplasm, shortly after virus entry into the cell. This enzyme displays a DNA polymerase activity that can copy either DNA or RNA templates, and a ribonuclease H (RNase H) activity that cleaves the RNA strand of RNA-DNA heteroduplexes in a partially processive 3' to 5' endonucleasic mode. Conversion of viral genomic RNA into dsDNA requires many steps. A tRNA(3)-Lys binds to the primer-binding site (PBS) situated at the 5'-end of the viral RNA. RT uses the 3' end of the tRNA primer to perform a short round of RNA-dependent minus-strand DNA synthesis. The reading proceeds through the U5 region and ends after the repeated (R) region which is present at both ends of viral RNA. The portion of the RNA-DNA heteroduplex is digested by the RNase H, resulting in a ssDNA product attached to the tRNA primer. This ssDNA/tRNA hybridizes with the identical R region situated at the 3' end of viral RNA. This template exchange, known as minus-strand DNA strong stop transfer, can be either intra- or intermolecular. RT uses the 3' end of this newly synthesized short ssDNA to perform the RNA-dependent minus-strand DNA synthesis of the whole template. RNase H digests the RNA template except for two polypurine tracts (PPTs) situated at the 5'-end and near the center of the genome. It is not clear if both polymerase and RNase H activities are simultaneous. RNase H probably can proceed both in a polymerase-dependent (RNA cut into small fragments by the same RT performing DNA synthesis) and a polymerase-independent mode (cleavage of remaining RNA fragments by free RTs). Secondly, RT performs DNA-directed plus-strand DNA synthesis using the PPTs that have not been removed by RNase H as primers. PPTs and tRNA primers are then removed by RNase H. The 3' and 5' ssDNA PBS regions hybridize to form a circular dsDNA intermediate. Strand displacement synthesis by RT to the PBS and PPT ends produces a blunt ended, linear dsDNA copy of the viral genome that includes long terminal repeats (LTRs) at both ends. Functionally, catalyzes viral DNA integration into the host chromosome, by performing a series of DNA cutting and joining reactions. This enzyme activity takes place after virion entry into a cell and reverse transcription of the RNA genome in dsDNA. The first step in the integration process is 3' processing. This step requires a complex comprising the viral genome, matrix protein, Vpr and integrase. This complex is called the pre-integration complex (PIC). The integrase protein removes 2 nucleotides from each 3' end of the viral DNA, leaving recessed CA OH's at the 3' ends. In the second step, the PIC enters cell nucleus. This process is mediated through integrase and Vpr proteins, and allows the virus to infect a non dividing cell. This ability to enter the nucleus is specific of lentiviruses, other retroviruses cannot and rely on cell division to access cell chromosomes. In the third step, termed strand transfer, the integrase protein joins the previously processed 3' ends to the 5' ends of strands of target cellular DNA at the site of integration. The 5'-ends are produced by integrase-catalyzed staggered cuts, 5 bp apart. A Y-shaped, gapped, recombination intermediate results, with the 5'-ends of the viral DNA strands and the 3' ends of target DNA strands remaining unjoined, flanking a gap of 5 bp. The last step is viral DNA integration into host chromosome. This involves host DNA repair synthesis in which the 5 bp gaps between the unjoined strands are filled in and then ligated. Since this process occurs at both cuts flanking the HIV genome, a 5 bp duplication of host DNA is produced at the ends of HIV-1 integration. Alternatively, Integrase may catalyze the excision of viral DNA just after strand transfer, this is termed disintegration. In Human immunodeficiency virus type 2 subtype A (isolate SBLISY) (HIV-2), this protein is Gag-Pol polyprotein (gag-pol).